Consider the following 242-residue polypeptide: DNA repair protein RecO (242 aa).

It belongs to the RecO family.

Involved in DNA repair and RecF pathway recombination. This Vibrio atlanticus (strain LGP32) (Vibrio splendidus (strain Mel32)) protein is DNA repair protein RecO.